A 276-amino-acid chain; its full sequence is Phospholipid phosphatase 2 (276 aa).

Residues methionine 1 to arginine 4 are Cytoplasmic-facing. The chain crosses the membrane as a helical span at residues tryptophan 5–leucine 25. Residues threonine 26 to threonine 51 are Lumenal-facing. Residues isoleucine 52–glycine 72 form a helical membrane-spanning segment. Over glutamate 73–aspartate 87 the chain is Cytoplasmic. A helical membrane pass occupies residues phenylalanine 88–valine 108. Residues serine 109–leucine 161 lie on the Lumenal side of the membrane. The interval lysine 117–proline 125 is phosphatase sequence motif I. Residues asparagine 139 and asparagine 155 are each glycosylated (N-linked (GlcNAc...) asparagine). A helical transmembrane segment spans residues serine 162–valine 182. Positions tyrosine 164 to histidine 167 are phosphatase sequence motif II. Histidine 167 serves as the catalytic Proton donors. The Cytoplasmic segment spans residues glutamine 183–lysine 189. The chain crosses the membrane as a helical span at residues tryptophan 190–glycine 210. Residues tyrosine 211–leucine 225 are Lumenal-facing. Residues threonine 212–aspartate 223 are phosphatase sequence motif III. The Nucleophile role is filled by histidine 219. Residues valine 226–phenylalanine 246 traverse the membrane as a helical segment. The Cytoplasmic portion of the chain corresponds to lysine 247–proline 276. The interval glutamine 252–proline 276 is disordered.

It belongs to the PA-phosphatase related phosphoesterase family. In terms of assembly, forms functional homodimers and homooligomers. Can also form heterooligomers with PLPP1 and PLPP3. In terms of processing, N-glycosylated. In terms of tissue distribution, expressed in the brain.

It localises to the membrane. Its subcellular location is the cell membrane. The protein localises to the early endosome membrane. The protein resides in the endoplasmic reticulum membrane. It carries out the reaction a 1,2-diacyl-sn-glycero-3-phosphate + H2O = a 1,2-diacyl-sn-glycerol + phosphate. The enzyme catalyses 1,2-dihexadecanoyl-sn-glycero-3-phosphate + H2O = 1,2-dihexadecanoyl-sn-glycerol + phosphate. The catalysed reaction is 1,2-di-(9Z-octadecenoyl)-sn-glycero-3-phosphate + H2O = 1,2-di-(9Z-octadecenoyl)-sn-glycerol + phosphate. It catalyses the reaction a monoacyl-sn-glycero-3-phosphate + H2O = a monoacylglycerol + phosphate. It carries out the reaction (9Z)-octadecenoyl-sn-glycero-3-phosphate + H2O = (9Z-octadecenoyl)-glycerol + phosphate. The enzyme catalyses sphing-4-enine 1-phosphate + H2O = sphing-4-enine + phosphate. The catalysed reaction is an N-acylsphing-4-enine 1-phosphate + H2O = an N-acylsphing-4-enine + phosphate. It catalyses the reaction N-(octanoyl)-sphing-4-enine-1-phosphate + H2O = N-octanoylsphing-4-enine + phosphate. It carries out the reaction N-(9Z-octadecenoyl)-ethanolamine phosphate + H2O = N-(9Z-octadecenoyl) ethanolamine + phosphate. The protein operates within lipid metabolism; phospholipid metabolism. Magnesium-independent phospholipid phosphatase. Insensitive to N-ethylmaleimide. In terms of biological role, magnesium-independent phospholipid phosphatase that catalyzes the dephosphorylation of a variety of glycerolipid and sphingolipid phosphate esters including phosphatidate/PA, lysophosphatidate/LPA, sphingosine 1-phosphate/S1P and ceramide 1-phosphate/C1P. Has no apparent extracellular phosphatase activity and therefore most probably acts intracellularly. Also acts on N-oleoyl ethanolamine phosphate/N-(9Z-octadecenoyl)-ethanolamine phosphate, a potential physiological compound. Through dephosphorylation of these bioactive lipid mediators produces new bioactive compounds and may regulate signal transduction in different cellular processes. Indirectly regulates, for instance, cell cycle G1/S phase transition through its phospholipid phosphatase activity. The polypeptide is Phospholipid phosphatase 2 (Rattus norvegicus (Rat)).